Consider the following 498-residue polypeptide: Glutamate--tRNA ligase (498 aa).

The short motif at 10 to 20 is the 'HIGH' region element; the sequence is PSPTGYFHIGG. Positions 252–256 match the 'KMSKS' region motif; it reads KLSKR. Lysine 255 is an ATP binding site.

Belongs to the class-I aminoacyl-tRNA synthetase family. Glutamate--tRNA ligase type 1 subfamily. Monomer.

It localises to the cytoplasm. It carries out the reaction tRNA(Glu) + L-glutamate + ATP = L-glutamyl-tRNA(Glu) + AMP + diphosphate. Its function is as follows. Catalyzes the attachment of glutamate to tRNA(Glu) in a two-step reaction: glutamate is first activated by ATP to form Glu-AMP and then transferred to the acceptor end of tRNA(Glu). This chain is Glutamate--tRNA ligase, found in Mycoplasmoides gallisepticum (strain R(low / passage 15 / clone 2)) (Mycoplasma gallisepticum).